The sequence spans 373 residues: Pollen allergen KBG 31 (373 aa).

Positions 1-28 (MDKANGAYKTALKAASAVAPAEKFPVFQ) are cleaved as a signal peptide.

This sequence belongs to the Poa p IX/Phl p VI allergen family. In terms of tissue distribution, pollen.

The protein is Pollen allergen KBG 31 of Poa pratensis (Kentucky bluegrass).